A 564-amino-acid polypeptide reads, in one-letter code: Phenylalanine--tRNA ligase beta subunit (564 aa).

Residues 286 to 362 form the B5 domain; the sequence is YFQNSLKINV…IGKGLDNFKS (77 aa). Mg(2+) contacts are provided by D340, D346, E349, and E350.

It belongs to the phenylalanyl-tRNA synthetase beta subunit family. Type 2 subfamily. As to quaternary structure, tetramer of two alpha and two beta subunits. Requires Mg(2+) as cofactor.

It is found in the cytoplasm. The enzyme catalyses tRNA(Phe) + L-phenylalanine + ATP = L-phenylalanyl-tRNA(Phe) + AMP + diphosphate + H(+). This Borrelia recurrentis (strain A1) protein is Phenylalanine--tRNA ligase beta subunit.